The sequence spans 658 residues: UvrABC system protein B (658 aa).

A Helicase ATP-binding domain is found at 25–178 (KSLKNKNHYQ…KSFLLKLVEM (154 aa)). 38-45 (GVTGSGKT) serves as a coordination point for ATP. The Beta-hairpin motif lies at 91-114 (HFDYYQPESYIPRRDLFIEKDSSI). Positions 433–607 (QVQDLFDEIK…ELKLRDDETK (175 aa)) constitute a Helicase C-terminal domain. The 36-residue stretch at 623–658 (EKIIKELDKKMRECAKNLDFEEAMHLRDEIAKLRTL) folds into the UVR domain.

This sequence belongs to the UvrB family. Forms a heterotetramer with UvrA during the search for lesions. Interacts with UvrC in an incision complex.

The protein localises to the cytoplasm. Functionally, the UvrABC repair system catalyzes the recognition and processing of DNA lesions. A damage recognition complex composed of 2 UvrA and 2 UvrB subunits scans DNA for abnormalities. Upon binding of the UvrA(2)B(2) complex to a putative damaged site, the DNA wraps around one UvrB monomer. DNA wrap is dependent on ATP binding by UvrB and probably causes local melting of the DNA helix, facilitating insertion of UvrB beta-hairpin between the DNA strands. Then UvrB probes one DNA strand for the presence of a lesion. If a lesion is found the UvrA subunits dissociate and the UvrB-DNA preincision complex is formed. This complex is subsequently bound by UvrC and the second UvrB is released. If no lesion is found, the DNA wraps around the other UvrB subunit that will check the other stand for damage. This is UvrABC system protein B from Helicobacter acinonychis (strain Sheeba).